The primary structure comprises 92 residues: DNA-binding protein HU (92 aa).

Positions 58-92 are disordered; the sequence is AGTARNPRTGETVNRPASKTARFQVGEGLKSSLNS.

The protein belongs to the bacterial histone-like protein family. Homodimer.

In terms of biological role, histone-like DNA-binding protein which is capable of wrapping DNA to stabilize it, and thus to prevent its denaturation under extreme environmental conditions. The protein is DNA-binding protein HU (hup) of Caulobacter vibrioides (strain ATCC 19089 / CIP 103742 / CB 15) (Caulobacter crescentus).